We begin with the raw amino-acid sequence, 482 residues long: Anaerobic nitric oxide reductase flavorubredoxin (482 aa).

Residues 30–210 (LRGSSYNSYL…PFSRLVTPKI (181 aa)) form a zinc metallo-hydrolase region. 6 residues coordinate Fe cation: His79, Glu81, Asp83, His147, Asp166, and His227. The Flavodoxin-like domain maps to 254–393 (ITLFYDTMSN…ICRQHGREIA (140 aa)). Residues 260–264 (TMSNN) and 342–369 (AFGSHGWSGGAVDRLSTRLQDAGFEMSM) each bind FMN. The Rubredoxin-like domain occupies 426–477 (GPCMQCSVCQWVYDPALGEPLQDVAPGTPWSDVPDNFLCPECSLGKDVFDVL). The Fe cation site is built by Cys431, Cys434, Cys464, and Cys467.

This sequence in the N-terminal section; belongs to the zinc metallo-hydrolase group 3 family. In terms of assembly, homotetramer. Fe cation is required as a cofactor. FMN serves as cofactor.

The protein localises to the cytoplasm. It functions in the pathway nitrogen metabolism; nitric oxide reduction. Its function is as follows. Anaerobic nitric oxide reductase; uses NADH to detoxify nitric oxide (NO), protecting several 4Fe-4S NO-sensitive enzymes. Has at least 2 reductase partners, only one of which (NorW, flavorubredoxin reductase) has been identified. NO probably binds to the di-iron center; electrons enter from the NorW at rubredoxin and are transferred sequentially to the FMN center and the di-iron center. Also able to function as an aerobic oxygen reductase. The protein is Anaerobic nitric oxide reductase flavorubredoxin of Enterobacter sp. (strain 638).